The chain runs to 271 residues: Phosphate import ATP-binding protein PstB (271 aa).

Residues 24 to 266 (MIGNDVSVYY…PDDQRTQDYI (243 aa)) enclose the ABC transporter domain. An ATP-binding site is contributed by 56–63 (GPSGCGKS).

Belongs to the ABC transporter superfamily. Phosphate importer (TC 3.A.1.7) family. The complex is composed of two ATP-binding proteins (PstB), two transmembrane proteins (PstC and PstA) and a solute-binding protein (PstS).

The protein resides in the cell inner membrane. The catalysed reaction is phosphate(out) + ATP + H2O = ADP + 2 phosphate(in) + H(+). Functionally, part of the ABC transporter complex PstSACB involved in phosphate import. Responsible for energy coupling to the transport system. This is Phosphate import ATP-binding protein PstB from Rhizobium meliloti (strain 1021) (Ensifer meliloti).